Consider the following 124-residue polypeptide: Ribonuclease pancreatic (124 aa).

The span at 1 to 15 shows a compositional bias: basic and acidic residues; that stretch reads KESPAKKFQRQHMDP. The tract at residues 1 to 24 is disordered; the sequence is KESPAKKFQRQHMDPDSSSSNSSN. Substrate-binding residues include K7 and R10. The Proton acceptor role is filled by H12. 2 N-linked (GlcNAc...) asparagine glycosylation sites follow: N21 and N34. Disulfide bonds link C26/C84, C40/C95, C58/C110, and C65/C72. Substrate is bound by residues 41–45 and K66; that span reads KPVNT. Residue N76 is glycosylated (N-linked (GlcNAc...) asparagine). R85 serves as a coordination point for substrate. The active-site Proton donor is H119.

It belongs to the pancreatic ribonuclease family. As to quaternary structure, monomer. Interacts with and forms tight 1:1 complexes with RNH1. Dimerization of two such complexes may occur. Interaction with RNH1 inhibits this protein. Pancreas.

It is found in the secreted. It catalyses the reaction an [RNA] containing cytidine + H2O = an [RNA]-3'-cytidine-3'-phosphate + a 5'-hydroxy-ribonucleotide-3'-[RNA].. The catalysed reaction is an [RNA] containing uridine + H2O = an [RNA]-3'-uridine-3'-phosphate + a 5'-hydroxy-ribonucleotide-3'-[RNA].. Functionally, endonuclease that catalyzes the cleavage of RNA on the 3' side of pyrimidine nucleotides. Acts on single-stranded and double-stranded RNA. The polypeptide is Ribonuclease pancreatic (RNASE1) (Sus scrofa (Pig)).